A 70-amino-acid chain; its full sequence is UPF0352 protein PBPRA2586 (70 aa).

The protein belongs to the UPF0352 family.

This is UPF0352 protein PBPRA2586 from Photobacterium profundum (strain SS9).